Reading from the N-terminus, the 429-residue chain is Stromal membrane-associated protein 2 (429 aa).

Residues 13-137 form the Arf-GAP domain; the sequence is QAVLANLLLE…LDINAFRKEK (125 aa). The segment at 28 to 51 adopts a C4-type zinc-finger fold; sequence CADCQSKGPRWASWNIGVFICIRC. A Phosphoserine modification is found at S127. A compositionally biased stretch (basic and acidic residues) spans 138–172; that stretch reads DNKWKRGSEPAPEKKMEPVVFEKVKMPQKKEDPQL. 2 disordered regions span residues 138–181 and 217–263; these read DNKW…PKSK and VSSP…KKQL. The interaction with clathrin heavy chains stretch occupies residues 163-232; the sequence is MPQKKEDPQL…SVSRKVVGSM (70 aa). Positions 217–231 are enriched in low complexity; that stretch reads VSSPSSSVSRKVVGS. 5 positions are modified to phosphoserine: S219, S223, S225, S231, and S240. Basic and acidic residues predominate over residues 253–263; sequence SKSEETSKKQL. The interval 340 to 429 is interaction with PICALM; sequence MGGMQASMMG…NQTLSPQMWK (90 aa).

Interacts with ARF1. Interacts with PICALM and clathrin heavy chains.

The protein resides in the cytoplasm. GTPase activating protein that acts on ARF1. Can also activate ARF6 (in vitro). May play a role in clathrin-dependent retrograde transport from early endosomes to the trans-Golgi network. The sequence is that of Stromal membrane-associated protein 2 (SMAP2) from Bos taurus (Bovine).